The chain runs to 510 residues: Maturase K (510 aa).

This sequence belongs to the intron maturase 2 family. MatK subfamily.

The protein localises to the plastid. Functionally, usually encoded in the trnK tRNA gene intron. Probably assists in splicing its own and other chloroplast group II introns. This is Maturase K from Aneura mirabilis (Parasitic liverwort).